The primary structure comprises 92 residues: Exodeoxyribonuclease 7 small subunit (92 aa).

The disordered stretch occupies residues 1 to 22 (MPKKNAISESTNSTPETAPAMT). The span at 7 to 16 (ISESTNSTPE) shows a compositional bias: polar residues.

It belongs to the XseB family. Heterooligomer composed of large and small subunits.

It localises to the cytoplasm. It catalyses the reaction Exonucleolytic cleavage in either 5'- to 3'- or 3'- to 5'-direction to yield nucleoside 5'-phosphates.. Bidirectionally degrades single-stranded DNA into large acid-insoluble oligonucleotides, which are then degraded further into small acid-soluble oligonucleotides. This is Exodeoxyribonuclease 7 small subunit from Photorhabdus laumondii subsp. laumondii (strain DSM 15139 / CIP 105565 / TT01) (Photorhabdus luminescens subsp. laumondii).